The chain runs to 202 residues: Large ribosomal subunit protein bL17 (202 aa).

Positions aspartate 132–lysine 202 are disordered. Over residues alanine 134–threonine 168 the composition is skewed to low complexity. The span at alanine 169–threonine 193 shows a compositional bias: acidic residues.

Belongs to the bacterial ribosomal protein bL17 family. In terms of assembly, part of the 50S ribosomal subunit. Contacts protein L32.

In Mycolicibacterium vanbaalenii (strain DSM 7251 / JCM 13017 / BCRC 16820 / KCTC 9966 / NRRL B-24157 / PYR-1) (Mycobacterium vanbaalenii), this protein is Large ribosomal subunit protein bL17.